Consider the following 460-residue polypeptide: Proton extrusion protein PxcA (460 aa).

Positions 84–194 (RLPDPEQNGS…KTNLDNSNAP (111 aa)) are disordered. The span at 114–136 (NDGKDAENGRQSRDPSILEKLEF) shows a compositional bias: basic and acidic residues. The span at 167-194 (LTSSQPEPSDPSIKTNLAKTNLDNSNAP) shows a compositional bias: polar residues. 4 helical membrane-spanning segments follow: residues 242–262 (FLLLLAILPLLVQIFSKHFLF), 337–357 (GLKNVLADVLSLLVFGWLILI), 373–393 (IYGLSDSAKAFIIILFTDVFV), and 420–440 (FIYGFIATFPVFLDTLFKYWI).

It belongs to the CemA family.

It localises to the cell inner membrane. Functionally, required for H(+) efflux immediately after light irradiation to form a rapid H(+) concentration gradient across the thylakoid membranes. Together with PxcL, contributes to transient H(+) uptake following dark to light transition. The chain is Proton extrusion protein PxcA from Synechococcus sp. (strain JA-3-3Ab) (Cyanobacteria bacterium Yellowstone A-Prime).